Here is a 515-residue protein sequence, read N- to C-terminus: Maturase K (515 aa).

This sequence belongs to the intron maturase 2 family. MatK subfamily.

It localises to the plastid. It is found in the chloroplast. Usually encoded in the trnK tRNA gene intron. Probably assists in splicing its own and other chloroplast group II introns. The polypeptide is Maturase K (Pinus cembra (Swiss stone pine)).